A 146-amino-acid polypeptide reads, in one-letter code: MKLHELRPAEGSRKSPKRVGRGTGSGLGKTSARGENGQNSRSGGGVRPGFEGGQMPLYRRLPKRGFTNIFAKKYTAINIDRLNIFEDDTVVTPELLIEKGVISKVYDGVKILGNGELDKKLIVKATKFSKAAAEKIEAAGGKVEVI.

Residues 1 to 13 show a composition bias toward basic and acidic residues; it reads MKLHELRPAEGSR. Residues 1-55 are disordered; the sequence is MKLHELRPAEGSRKSPKRVGRGTGSGLGKTSARGENGQNSRSGGGVRPGFEGGQM. Positions 42 to 52 are enriched in gly residues; the sequence is SGGGVRPGFEG.

This sequence belongs to the universal ribosomal protein uL15 family. In terms of assembly, part of the 50S ribosomal subunit.

In terms of biological role, binds to the 23S rRNA. This is Large ribosomal subunit protein uL15 from Clostridium tetani (strain Massachusetts / E88).